Consider the following 393-residue polypeptide: NADH-quinone oxidoreductase subunit D 2 (393 aa).

Belongs to the complex I 49 kDa subunit family. NDH-1 is composed of 14 different subunits. Subunits NuoB, C, D, E, F, and G constitute the peripheral sector of the complex.

The protein localises to the cell inner membrane. The catalysed reaction is a quinone + NADH + 5 H(+)(in) = a quinol + NAD(+) + 4 H(+)(out). NDH-1 shuttles electrons from NADH, via FMN and iron-sulfur (Fe-S) centers, to quinones in the respiratory chain. The immediate electron acceptor for the enzyme in this species is believed to be a menaquinone. Couples the redox reaction to proton translocation (for every two electrons transferred, four hydrogen ions are translocated across the cytoplasmic membrane), and thus conserves the redox energy in a proton gradient. This is NADH-quinone oxidoreductase subunit D 2 from Cytophaga hutchinsonii (strain ATCC 33406 / DSM 1761 / CIP 103989 / NBRC 15051 / NCIMB 9469 / D465).